Here is a 182-residue protein sequence, read N- to C-terminus: Large ribosomal subunit protein bL25 (182 aa).

This sequence belongs to the bacterial ribosomal protein bL25 family. CTC subfamily. Part of the 50S ribosomal subunit; part of the 5S rRNA/L5/L18/L25 subcomplex. Contacts the 5S rRNA. Binds to the 5S rRNA independently of L5 and L18.

In terms of biological role, this is one of the proteins that binds to the 5S RNA in the ribosome where it forms part of the central protuberance. This is Large ribosomal subunit protein bL25 from Borreliella afzelii (strain PKo) (Borrelia afzelii).